A 68-amino-acid chain; its full sequence is Large ribosomal subunit protein bL31 (68 aa).

Residues C16, C18, C36, and C39 each coordinate Zn(2+).

It belongs to the bacterial ribosomal protein bL31 family. Type A subfamily. As to quaternary structure, part of the 50S ribosomal subunit. Zn(2+) is required as a cofactor.

Binds the 23S rRNA. In Dictyoglomus turgidum (strain DSM 6724 / Z-1310), this protein is Large ribosomal subunit protein bL31.